Reading from the N-terminus, the 205-residue chain is Large ribosomal subunit protein uL4 (205 aa).

The segment at 45 to 97 is disordered; it reads RQGTSAVKNRSAVRGGGKKPWRQKGTGRARQGSIRAPQWRGGGTVFGPTPRSY. Residues 60–71 show a composition bias toward basic residues; sequence GGKKPWRQKGTG.

It belongs to the universal ribosomal protein uL4 family. In terms of assembly, part of the 50S ribosomal subunit.

One of the primary rRNA binding proteins, this protein initially binds near the 5'-end of the 23S rRNA. It is important during the early stages of 50S assembly. It makes multiple contacts with different domains of the 23S rRNA in the assembled 50S subunit and ribosome. In terms of biological role, forms part of the polypeptide exit tunnel. In Lactobacillus johnsonii (strain CNCM I-12250 / La1 / NCC 533), this protein is Large ribosomal subunit protein uL4.